The chain runs to 176 residues: Small ribosomal subunit protein uS5 (176 aa).

An S5 DRBM domain is found at 11 to 74 (LSEVLVDVNR…QAAKKRMMKV (64 aa)).

This sequence belongs to the universal ribosomal protein uS5 family. In terms of assembly, part of the 30S ribosomal subunit. Contacts proteins S4 and S8.

With S4 and S12 plays an important role in translational accuracy. In terms of biological role, located at the back of the 30S subunit body where it stabilizes the conformation of the head with respect to the body. The sequence is that of Small ribosomal subunit protein uS5 from Rickettsia conorii (strain ATCC VR-613 / Malish 7).